Consider the following 1859-residue polypeptide: DNA-directed RNA polymerase subunit beta'' (1859 aa).

Residues Cys-286, Cys-359, Cys-366, and Cys-369 each contribute to the Zn(2+) site.

The protein belongs to the RNA polymerase beta' chain family. RpoC2 subfamily. As to quaternary structure, in plastids the minimal PEP RNA polymerase catalytic core is composed of four subunits: alpha, beta, beta', and beta''. When a (nuclear-encoded) sigma factor is associated with the core the holoenzyme is formed, which can initiate transcription. Zn(2+) is required as a cofactor.

It is found in the plastid. The protein resides in the chloroplast. It catalyses the reaction RNA(n) + a ribonucleoside 5'-triphosphate = RNA(n+1) + diphosphate. In terms of biological role, DNA-dependent RNA polymerase catalyzes the transcription of DNA into RNA using the four ribonucleoside triphosphates as substrates. This chain is DNA-directed RNA polymerase subunit beta'', found in Oltmannsiellopsis viridis (Marine flagellate).